The following is a 1311-amino-acid chain: Ubiquitin carboxyl-terminal hydrolase 36 (1311 aa).

Composition is skewed to low complexity over residues 120-134 (AAAA…SAGS) and 156-174 (STPT…SSSS). Residues 120 to 189 (AAAATNNGNS…NPNELPKPKR (70 aa)) are disordered. Positions 212 to 533 (AGMINVGNTC…NSYIMFYELD (322 aa)) constitute a USP domain. The Nucleophile role is filled by cysteine 221. The active-site Proton acceptor is the histidine 492. A disordered region spans residues 546 to 575 (NGLRQLSNGHHHHQQQQQQHQQQQQQQPTV). Over residues 560–572 (QQQQQHQQQQQQQ) the composition is skewed to low complexity. Position 581 is a phosphoserine (serine 581). Disordered regions lie at residues 587-620 (TRFI…GHSQ), 640-1095 (KFQE…GCLN), and 1136-1311 (DHGD…QQQS). Composition is skewed to low complexity over residues 605-616 (TTTTTATNNTTN), 660-716 (APAV…QQQQ), and 759-774 (TLTL…STPT). Threonine 767 carries the phosphothreonine modification. Residues serine 787 and serine 789 each carry the phosphoserine modification. Low complexity predominate over residues 795 to 826 (SSGTPSSSTPTTTTTAAAAAASSPMQATAAAT). A compositionally biased stretch (basic residues) spans 836 to 853 (ARKRSLPDHHHHHPHHHV). A compositionally biased stretch (polar residues) spans 869–879 (PATNFNSSSSK). The segment covering 880–889 (QKTDAIDEIF) has biased composition (basic and acidic residues). Basic residues predominate over residues 896–905 (NKKRINNKNQ). Acidic residues predominate over residues 910–920 (GDEEEDDEETL). Composition is skewed to low complexity over residues 925–942 (NNSS…PTTN) and 950–979 (VSSS…STSA). Positions 980–989 (PPSPKTPPSP) are enriched in pro residues. Phosphoserine is present on serine 982. Threonine 985 carries the phosphothreonine modification. Serine 988 bears the Phosphoserine mark. Positions 1006 to 1020 (DDDDDEEEEDEDDEE) are enriched in acidic residues. A compositionally biased stretch (low complexity) spans 1037 to 1050 (PFSSQQKPTPSPST). Residue serine 1047 is modified to Phosphoserine. At threonine 1050 the chain carries Phosphothreonine. The span at 1060–1081 (FNGTSSSTPHVGNGYQSEPSTP) shows a compositional bias: polar residues. 2 stretches are compositionally biased toward low complexity: residues 1154–1176 (VVTT…TADA) and 1204–1221 (TANG…PGYN). Residues 1246–1255 (QHASSSYRSN) are compositionally biased toward polar residues. The segment covering 1267–1276 (GGNGGGGSGG) has biased composition (gly residues).

It belongs to the peptidase C19 family. In terms of assembly, interacts with atms/PAF1, but not with CycT.

Its subcellular location is the nucleus. The protein resides in the nucleolus. The catalysed reaction is Thiol-dependent hydrolysis of ester, thioester, amide, peptide and isopeptide bonds formed by the C-terminal Gly of ubiquitin (a 76-residue protein attached to proteins as an intracellular targeting signal).. Its function is as follows. Required for maintaining multiple types of adult stem cells, including male and female germline, epithelial follicle cell and intestinal stem cells. May function as a transcriptional repressor by continually deubiquiting histone H2B at the promoters of genes critical for cellular differentiation, thereby preventing histone H3 'Lys-4' trimethylation (H3K4). Controls selective autophagy activation by ubiquitinated proteins. In Drosophila willistoni (Fruit fly), this protein is Ubiquitin carboxyl-terminal hydrolase 36 (Usp36).